A 388-amino-acid polypeptide reads, in one-letter code: Chorismate synthase (388 aa).

Residues arginine 39 and arginine 45 each coordinate NADP(+). Residues 130–132, 251–252, glycine 296, 311–315, and arginine 337 each bind FMN; these read RSS, NA, and KPIPT.

It belongs to the chorismate synthase family. In terms of assembly, homotetramer. The cofactor is FMNH2.

It catalyses the reaction 5-O-(1-carboxyvinyl)-3-phosphoshikimate = chorismate + phosphate. The protein operates within metabolic intermediate biosynthesis; chorismate biosynthesis; chorismate from D-erythrose 4-phosphate and phosphoenolpyruvate: step 7/7. Functionally, catalyzes the anti-1,4-elimination of the C-3 phosphate and the C-6 proR hydrogen from 5-enolpyruvylshikimate-3-phosphate (EPSP) to yield chorismate, which is the branch point compound that serves as the starting substrate for the three terminal pathways of aromatic amino acid biosynthesis. This reaction introduces a second double bond into the aromatic ring system. This Streptococcus pyogenes serotype M3 (strain SSI-1) protein is Chorismate synthase.